The following is a 1007-amino-acid chain: Beta-galactosidase (1007 aa).

Positions Thr29–Gly48 are disordered. The active-site Proton donor is the Glu465. Catalysis depends on Glu532, which acts as the Nucleophile.

The protein belongs to the glycosyl hydrolase 2 family. Monomer.

It carries out the reaction Hydrolysis of terminal non-reducing beta-D-galactose residues in beta-D-galactosides.. In Lactobacillus delbrueckii subsp. bulgaricus, this protein is Beta-galactosidase (lacZ).